A 789-amino-acid polypeptide reads, in one-letter code: Aconitate hydratase, mitochondrial (789 aa).

A mitochondrion-targeting transit peptide spans 1–32; the sequence is MFCKISRAPARMGSRIFTQSTLRSFSCAPVAA. Substrate contacts are provided by residues glutamine 106 and 199–201; that span reads DSH. Residues cysteine 392, cysteine 455, and cysteine 458 each coordinate [4Fe-4S] cluster. Substrate contacts are provided by residues arginine 481, arginine 486, arginine 613, and 676–677; that span reads SR.

The protein belongs to the aconitase/IPM isomerase family. As to quaternary structure, monomer. The cofactor is [4Fe-4S] cluster.

It localises to the mitochondrion. The catalysed reaction is citrate = D-threo-isocitrate. It participates in carbohydrate metabolism; tricarboxylic acid cycle; isocitrate from oxaloacetate: step 2/2. Catalyzes the isomerization of citrate to isocitrate via cis-aconitate, a step in the citric acid cycle. The protein is Aconitate hydratase, mitochondrial of Schizosaccharomyces pombe (strain 972 / ATCC 24843) (Fission yeast).